The sequence spans 335 residues: Glyceraldehyde-3-phosphate dehydrogenase (335 aa).

NAD(+)-binding positions include 12 to 13 (RI), D36, R80, and S122. Residues 152–154 (SCT), T183, R198, 211–212 (TG), and R234 each bind D-glyceraldehyde 3-phosphate. C153 acts as the Nucleophile in catalysis. N316 serves as a coordination point for NAD(+).

Belongs to the glyceraldehyde-3-phosphate dehydrogenase family. Homotetramer.

Its subcellular location is the cytoplasm. It catalyses the reaction D-glyceraldehyde 3-phosphate + phosphate + NAD(+) = (2R)-3-phospho-glyceroyl phosphate + NADH + H(+). The protein operates within carbohydrate degradation; glycolysis; pyruvate from D-glyceraldehyde 3-phosphate: step 1/5. Catalyzes the oxidative phosphorylation of glyceraldehyde 3-phosphate (G3P) to 1,3-bisphosphoglycerate (BPG) using the cofactor NAD. The first reaction step involves the formation of a hemiacetal intermediate between G3P and a cysteine residue, and this hemiacetal intermediate is then oxidized to a thioester, with concomitant reduction of NAD to NADH. The reduced NADH is then exchanged with the second NAD, and the thioester is attacked by a nucleophilic inorganic phosphate to produce BPG. This is Glyceraldehyde-3-phosphate dehydrogenase (gap) from Xanthobacter flavus.